The primary structure comprises 332 residues: Transcription factor HBP-1b(c38) (332 aa).

The interval Met-1–Met-48 is disordered. A compositionally biased stretch (basic and acidic residues) spans Ser-34 to Thr-47. Residues Asp-44–Ser-107 enclose the bZIP domain. The tract at residues Lys-46 to Lys-66 is basic motif. Residues Thr-47 to Asp-142 adopt a coiled-coil conformation. The segment at Leu-72–Leu-86 is leucine-zipper. Positions Ala-111–Arg-329 constitute a DOG1 domain.

This sequence belongs to the bZIP family. Binds DNA as a dimer.

It is found in the nucleus. Its function is as follows. Transcriptional activator that binds specifically to the DNA sequence 5'-TGACG-3'. Recognizes ocs elements like the as-1 motif of the cauliflower mosaic virus 35S promoter. Binding to the as-1-like cis elements mediate auxin- and salicylic acid-inducible transcription. Binds to the hexamer motif 5'-ACGTCA-3' of histone gene promoters. In Triticum aestivum (Wheat), this protein is Transcription factor HBP-1b(c38).